A 74-amino-acid chain; its full sequence is Small ribosomal subunit protein bS18 (74 aa).

This sequence belongs to the bacterial ribosomal protein bS18 family. In terms of assembly, part of the 30S ribosomal subunit. Forms a tight heterodimer with protein bS6.

Its function is as follows. Binds as a heterodimer with protein bS6 to the central domain of the 16S rRNA, where it helps stabilize the platform of the 30S subunit. The chain is Small ribosomal subunit protein bS18 from Alkalilimnicola ehrlichii (strain ATCC BAA-1101 / DSM 17681 / MLHE-1).